Consider the following 511-residue polypeptide: Inactive cytochrome P450 monooxygenase cloA (511 aa).

Residues 17-37 (ILLTAGLCVPCALVIHGIYNL) form a helical membrane-spanning segment. N-linked (GlcNAc...) asparagine glycans are attached at residues Asn81 and Asn344. Cys450 contacts heme.

The protein belongs to the cytochrome P450 family. Heme serves as cofactor.

It is found in the membrane. Functionally, inactive cytochrome P450 monooxygenase; part of the gene cluster that mediates the biosynthesis of fungal ergot alkaloid. DmaW catalyzes the first step of ergot alkaloid biosynthesis by condensing dimethylallyl diphosphate (DMAP) and tryptophan to form 4-dimethylallyl-L-tryptophan. The second step is catalyzed by the methyltransferase easF that methylates 4-dimethylallyl-L-tryptophan in the presence of S-adenosyl-L-methionine, resulting in the formation of 4-dimethylallyl-L-abrine. The catalase easC and the FAD-dependent oxidoreductase easE then transform 4-dimethylallyl-L-abrine to chanoclavine-I which is further oxidized by easD in the presence of NAD(+), resulting in the formation of chanoclavine-I aldehyde. Agroclavine dehydrogenase easG then mediates the conversion of chanoclavine-I aldehyde to agroclavine via a non-enzymatic adduct reaction: the substrate is an iminium intermediate that is formed spontaneously from chanoclavine-I aldehyde in the presence of glutathione. Further conversion of agroclavine to paspalic acid is a two-step process involving oxidation of agroclavine to elymoclavine and of elymoclavine to paspalic acid, the second step being performed by the elymoclavine oxidase cloA. However, cloA does not encode a functional enzyme indicating that C.fusiformis terminates its ergot alkaloid pathway at elymoclavine. The polypeptide is Inactive cytochrome P450 monooxygenase cloA (Claviceps fusiformis (Ergot fungus)).